The following is a 167-amino-acid chain: Large ribosomal subunit protein uL10 (167 aa).

This sequence belongs to the universal ribosomal protein uL10 family. As to quaternary structure, part of the ribosomal stalk of the 50S ribosomal subunit. The N-terminus interacts with L11 and the large rRNA to form the base of the stalk. The C-terminus forms an elongated spine to which L12 dimers bind in a sequential fashion forming a multimeric L10(L12)X complex.

In terms of biological role, forms part of the ribosomal stalk, playing a central role in the interaction of the ribosome with GTP-bound translation factors. This chain is Large ribosomal subunit protein uL10, found in Ligilactobacillus salivarius (strain UCC118) (Lactobacillus salivarius).